The chain runs to 358 residues: MSNVSSINNKLAFISTKFYELITKRIPDKNIVISPPSIMLIVKMLLKASTDRSRNQLLDLLYMLPLDDDEDDDSNTDKILKELLSRTEYTSIFFIDHNKRIHDSYKKYVSKSNITSLVSGDVTVLCNKMSELNYNTEDMLSSIRKPPEASILFNIKYSDLWESPFSDNDSHKFFVTKYLTKVVPYIITSGMFGHMYCHEIKSNIINIPYLHNTYSMLLFFADTYKNFKYLEKHITPRILLSSKIGVSNMKYSEISVSIPKFSIQTQHNIKSVFVELGITDIFDENCSMKSVSPDKFSITSLFVKSQVDFINNKIVLGDQKKWEKISNNNYHINRPFIFVIKYNKTGSVVFMGKIKDPE.

The protein belongs to the serpin family. Poxviruses subfamily.

This is an uncharacterized protein from Fowlpox virus (strain NVSL) (FPV).